Consider the following 354-residue polypeptide: Methionine import ATP-binding protein MetN (354 aa).

One can recognise an ABC transporter domain in the interval 8-250 (LDHIDITFRQ…PKEALTQEFI (243 aa)). An ATP-binding site is contributed by 42–49 (GYSGAGKS).

The protein belongs to the ABC transporter superfamily. Methionine importer (TC 3.A.1.24) family. As to quaternary structure, the complex is composed of two ATP-binding proteins (MetN), two transmembrane proteins (MetI) and a solute-binding protein (MetQ).

Its subcellular location is the cell membrane. It catalyses the reaction L-methionine(out) + ATP + H2O = L-methionine(in) + ADP + phosphate + H(+). It carries out the reaction D-methionine(out) + ATP + H2O = D-methionine(in) + ADP + phosphate + H(+). Part of the ABC transporter complex MetNIQ involved in methionine import. Responsible for energy coupling to the transport system. This Streptococcus pyogenes serotype M1 protein is Methionine import ATP-binding protein MetN.